The chain runs to 207 residues: Putative 3-methyladenine DNA glycosylase (207 aa).

It belongs to the DNA glycosylase MPG family.

In Burkholderia orbicola (strain MC0-3), this protein is Putative 3-methyladenine DNA glycosylase.